A 419-amino-acid chain; its full sequence is [Butirosin acyl-carrier protein]--L-glutamate ligase (419 aa).

Positions Arg144–Asn345 constitute an ATP-grasp domain. Ile174 to Leu231 contributes to the ATP binding site. Asp298, Glu312, and Asn314 together coordinate Mg(2+). 3 residues coordinate Mn(2+): Asp298, Glu312, and Asn314.

In terms of assembly, monomer. The cofactor is Mg(2+). Mn(2+) serves as cofactor.

The catalysed reaction is holo-[BtrI ACP] + L-glutamate + ATP = gamma-L-glutamyl-[BtrI ACP] + ADP + phosphate. It carries out the reaction 4-aminobutanoyl-[BtrI ACP] + L-glutamate + ATP = 4-(gamma-L-glutamylamino)butanoyl-[BtrI ACP] + ADP + phosphate + H(+). It participates in antibiotic biosynthesis; butirosin biosynthesis. ATP-dependent ligase that catalyzes 2 steps in the biosynthesis of the side chain of the aminoglycoside antibiotics in the biosynthetic pathway of butirosin. Mediates the addition of one molecule of L-glutamate to a dedicated acyl-carrier protein. Following decarboxylation of the product by BtrK, adds a second L-glutamate molecule. In Niallia circulans (Bacillus circulans), this protein is [Butirosin acyl-carrier protein]--L-glutamate ligase (btrJ).